A 71-amino-acid polypeptide reads, in one-letter code: Non-disulfide-bridged peptide 5.5 (71 aa).

The N-terminal stretch at 1 to 23 (MKTQFIVLIVAIVFLQLLSQSEA) is a signal peptide. Residue L36 is modified to Leucine amide. The propeptide occupies 40-71 (DLRHLDLDQFDDMFDQPEISAADMKFLQDLLR).

Belongs to the non-disulfide-bridged peptide (NDBP) superfamily. Short antimicrobial peptide (group 4) family. In terms of tissue distribution, expressed by the venom gland.

It localises to the secreted. The protein resides in the target cell membrane. Functionally, antimicrobial peptide. Is active on Mycobacterium abscessus subsp. massiliense (MBC=200 uM), a rapidly growing and emerging pathogen associated with healthcare infections. Also shows antifungal activities. Has a weak hemolytic activity on human erythrocytes (10% at 610 uM), indicating a low toxicity (therapeutic index (TI)=3.05). In addition, treatment of infected macrophages reduces the bacterial load. In vivo, treatment of M.abscessus-infected mice causes a decrease in the bacterial load in the lungs and liver. This Hoffmannihadrurus gertschi (Scorpion) protein is Non-disulfide-bridged peptide 5.5.